A 507-amino-acid polypeptide reads, in one-letter code: ATP synthase subunit alpha, chloroplastic (507 aa).

Glycine 170–alanine 177 lines the ATP pocket.

It belongs to the ATPase alpha/beta chains family. As to quaternary structure, F-type ATPases have 2 components, CF(1) - the catalytic core - and CF(0) - the membrane proton channel. CF(1) has five subunits: alpha(3), beta(3), gamma(1), delta(1), epsilon(1). CF(0) has four main subunits: a, b, b' and c.

The protein resides in the plastid. It localises to the chloroplast thylakoid membrane. The enzyme catalyses ATP + H2O + 4 H(+)(in) = ADP + phosphate + 5 H(+)(out). Produces ATP from ADP in the presence of a proton gradient across the membrane. The alpha chain is a regulatory subunit. This Calycanthus floridus var. glaucus (Eastern sweetshrub) protein is ATP synthase subunit alpha, chloroplastic.